The chain runs to 639 residues: MAKIIGIDLGTTNSVVAVMEGGEPKVIANEEGGRTTPSVVGFTKSGERLVGQVAKRQAITNPENTIYSIKRFMGRRQNEVNDEMKMVPYKVKQQGDHIVVEAQGKDYTAPEVSAMILQKLKKAAEDYLGTSVTEAVITVPAYFNDAQRQATKDAGKIAGLDVKRIVNEPTAAALAYGLDKKKDETIAVYDFGGGTFDISILEVGEGVIEVKSTNGDTHLGGDNLDQKIVDWLIDEFKKDEGLDLRAKGNEMALQRLKDAAERAKIELSTALETEINLPFITADATGPKHLVKKLTRAKLEQLVEDILQRSIEPCKKAMADAGVDASKIDEVVLVGGQTRMPRIQEIVKQLFGKEPHRGVNPDEVVAIGAAVQAGVLAGEVKDLLLLDVTPLTLSIETLGGVATPMIPRNTTIPTKKTETFSTAGDSQTEVEVHVLQGERPMAGQNRTLGKFKLSGIPPAPRGVPQIEVTFDIDANGILNVTAKDTATGKDQKITITSSSGLSKEEVERMAKEAEAHSAEDKAKRDEIEARNQLDNLVYNIEKMLKENGDKVSGEEKAEVETALADAKKTLEGTPTAEELNAAREKLTASSHKLAEAMYKANAAAGAAPAGEPAPGEPQAEQKKDDGVIDAEYVDVDEKK.

A Phosphothreonine; by autocatalysis modification is found at T195. Positions 601–618 are enriched in low complexity; it reads NAAAGAAPAGEPAPGEPQ. The segment at 601–639 is disordered; sequence NAAAGAAPAGEPAPGEPQAEQKKDDGVIDAEYVDVDEKK. Acidic residues predominate over residues 627-639; it reads VIDAEYVDVDEKK.

Belongs to the heat shock protein 70 family.

Functionally, acts as a chaperone. The polypeptide is Chaperone protein DnaK (Acidobacterium capsulatum (strain ATCC 51196 / DSM 11244 / BCRC 80197 / JCM 7670 / NBRC 15755 / NCIMB 13165 / 161)).